The primary structure comprises 165 residues: Nicotine 6-hydroxylase small subunit (165 aa).

The 77-residue stretch at 10-86 (VEIDVEVNGR…GRSIRTVEDL (77 aa)) folds into the 2Fe-2S ferredoxin-type domain. The [2Fe-2S] cluster site is built by Cys48, Cys53, Cys56, and Cys68.

Heterotrimer composed of a large subunit (NdhL), a medium subunit (NdhM) and a small subunit (NdhS). [2Fe-2S] cluster serves as cofactor.

The protein localises to the cytoplasm. The enzyme catalyses (R)-nicotine + A + H2O = (R)-6-hydroxynicotine + AH2. It catalyses the reaction (S)-nicotine + A + H2O = (S)-6-hydroxynicotine + AH2. It participates in alkaloid degradation; nicotine degradation; 6-hydroxypseudooxynicotine from nicotine (R-isomer route): step 1/2. Its pathway is alkaloid degradation; nicotine degradation; 6-hydroxypseudooxynicotine from nicotine (S-isomer route): step 1/2. Nicotine dehydrogenase activity is inhibited by tungsten. In terms of biological role, component of the nicotine 6-hydroxylase, which is involved in the degradation of nicotine. Catalyzes the hydroxylation of the pyridine ring at C6 to form 6-hydroxynicotine. Can use both L-nicotine and D-nicotine. This chain is Nicotine 6-hydroxylase small subunit, found in Paenarthrobacter nicotinovorans (Arthrobacter nicotinovorans).